A 382-amino-acid polypeptide reads, in one-letter code: ADP,ATP carrier protein, mitochondrial (382 aa).

A mitochondrion-targeting transit peptide spans 1–71 (MAEQANQPTV…PMMSSSPIFA (71 aa)). Solcar repeat units lie at residues 80-173 (KNFM…FKRL), 185-277 (KWFG…LKPV), and 285-371 (DNFF…LQIL). 5 consecutive transmembrane segments (helical) span residues 82–109 (FMID…VKLL), 150–174 (TANV…KRLF), 183–203 (YWKW…SSLF), 253–274 (FNIS…YDSL), and 288–308 (FASF…SYPI). ADP contacts are provided by arginine 155 and lysine 167. Arginine 312 contacts ADP. The interval 312–317 (RRRMMM) is important for transport activity. The short motif at 312–317 (RRRMMM) is the Nucleotide carrier signature motif element. The helical transmembrane segment at 348 to 368 (AGANILRAIAGAGVLSGYDQL) threads the bilayer.

Belongs to the mitochondrial carrier (TC 2.A.29) family. As to quaternary structure, monomer.

The protein localises to the mitochondrion inner membrane. It catalyses the reaction ADP(in) + ATP(out) = ADP(out) + ATP(in). Its activity is regulated as follows. The matrix-open state (m-state) is inhibited by the membrane-permeable bongkrekic acid (BKA). The cytoplasmic-open state (c-state) is inhibited by the membrane-impermeable toxic inhibitor carboxyatractyloside (CATR). In terms of biological role, ADP:ATP antiporter that mediates import of ADP into the mitochondrial matrix for ATP synthesis, and export of ATP out to fuel the cell. Cycles between the cytoplasmic-open state (c-state) and the matrix-open state (m-state): operates by the alternating access mechanism with a single substrate-binding site intermittently exposed to either the cytosolic (c-state) or matrix (m-state) side of the inner mitochondrial membrane. This chain is ADP,ATP carrier protein, mitochondrial, found in Oryza sativa subsp. japonica (Rice).